The following is a 169-amino-acid chain: E1B protein, small T-antigen (169 aa).

It belongs to the adenoviridae E1B 19 kDa protein family.

The sequence is that of E1B protein, small T-antigen from Canis lupus familiaris (Dog).